We begin with the raw amino-acid sequence, 445 residues long: mRNA cleavage and polyadenylation factor CLP1 (445 aa).

ATP-binding positions include D33, K72, and 133 to 138; that span reads QTGKTS.

The protein belongs to the Clp1 family. Clp1 subfamily. Component of the cleavage factor IA (CF IA) complex, which is a heterohexameric complex with 2:2:1:1 stoichiometry of RNA14, RNA15, PCF11 and CLP1. It contains 2 copies of an RNA14-RNA15 dimer and 1 copy of CLP1-PCF11. The complex interacts with the cleavage factor HRB1/CF IB to form the cleavage factor I (CF I) complex, and binds to RNA. Interacts directly with PCF11. Interacts with the CPF components CFT1, PTA1, PFS2, YSH1 and SSU72.

It is found in the nucleus. Functionally, component of the cleavage factor IA (CF IA) complex, which is involved in the endonucleolytic cleavage during polyadenylation-dependent pre-mRNA 3'-end formation. Associates with HRB1/CF IB to form the cleavage factor I (CF I) complex. CF I is required for correct positioning of a larger protein complex, the cleavage and polyadenylation factor (CPF) complex, which contains the catalytic subunits executing mRNA cleavage and polyadenylation. CLP1 mediates interactions between CF IA and CPF factors. CLP1 is also involved in maintaining the CF IA interaction with the C-terminal domain of RNA Pol II largest subunit via PCF11, which links pre-mRNA 3'-end processing to transcription termination. The chain is mRNA cleavage and polyadenylation factor CLP1 from Saccharomyces cerevisiae (strain YJM789) (Baker's yeast).